We begin with the raw amino-acid sequence, 485 residues long: Ribosomal protein uS12 methylthiotransferase RimO (485 aa).

The MTTase N-terminal domain maps to 19 to 135; that stretch reads VKVGFISLGC…IGEVVAGILA (117 aa). [4Fe-4S] cluster-binding residues include Cys28, Cys64, Cys98, Cys172, Cys176, and Cys179. The Radical SAM core domain occupies 158 to 387; sequence ATPGYTAYLK…MEVQQEIARR (230 aa). The TRAM domain maps to 390-461; that stretch reads QLQVGRELEV…DYDLLGEATE (72 aa).

This sequence belongs to the methylthiotransferase family. RimO subfamily. [4Fe-4S] cluster is required as a cofactor.

It localises to the cytoplasm. The catalysed reaction is L-aspartate(89)-[ribosomal protein uS12]-hydrogen + (sulfur carrier)-SH + AH2 + 2 S-adenosyl-L-methionine = 3-methylsulfanyl-L-aspartate(89)-[ribosomal protein uS12]-hydrogen + (sulfur carrier)-H + 5'-deoxyadenosine + L-methionine + A + S-adenosyl-L-homocysteine + 2 H(+). Its function is as follows. Catalyzes the methylthiolation of an aspartic acid residue of ribosomal protein uS12. In Symbiobacterium thermophilum (strain DSM 24528 / JCM 14929 / IAM 14863 / T), this protein is Ribosomal protein uS12 methylthiotransferase RimO.